The chain runs to 722 residues: MGHWPESKPLKMQEFIVELQPRIKTFEMGGETFTLETGRIARQATGAVLVSTGDTAVLGTVVGAKEPKPGQGFFPLTVNYQEKTYAAGKIPGGFFKREGRPSEKETLTSRLIDRPIRPLFPNGYMNEVQVVLTVMSASKNHDPDIAAMIAASAALAISGIPFDGPIGAARVGYTNEKGYFLNPTFEELSTSLLDMVVAGTDEAVLMVESEAKGLTEDQMLGAVLFGHQEMQTAITAIKEFAAENGKPRWEWQPEAENTELLNAIKAEFGGAIEEAYAIRDKMARYERLGEIKSAAVEKLAGEEEGQPSEEEVKKYFGKVEKSVVRLQVIEGKPRIDGRDNKTVRPIKVEVGVLPSVHGSALFTRGETQAIVTATLGTTRDVQIIDALEGERKDPFLFHYNFPPYSVGEAGRMGSPGRREIGHGRLAKRGVAAVMPTIEEFPYAIRAVSEITESNGSSSMASVCGSSLALMDAGVPLKAPVAGIAMGLVKEGDKFAVLTDILGDEDHLGDMDFKVAGTKEGVTALQMDIKIQGITDEIMEIALEQANAARLHILDEMNKVIAEPRAELSDRAPSITTIKIHPDKIRDVIGKGGATIRGICDETGASIDLDDDGNVKIYADNAAAAQAAVNRVKEITAEIEVGAIYKGRVERIVDFGAFVNILPGKDGLVHISQISERRIENVTDELSEGQEVLVKVLDVDNRGRVKLSMKEVKEGEQPTDFAD.

Residues aspartate 505 and aspartate 511 each contribute to the Mg(2+) site. The KH domain maps to 572 to 631 (PSITTIKIHPDKIRDVIGKGGATIRGICDETGASIDLDDDGNVKIYADNAAAAQAAVNRV). Residues 641–709 (GAIYKGRVER…NRGRVKLSMK (69 aa)) enclose the S1 motif domain.

It belongs to the polyribonucleotide nucleotidyltransferase family. Component of the RNA degradosome, which is a multiprotein complex involved in RNA processing and mRNA degradation. It depends on Mg(2+) as a cofactor.

The protein localises to the cytoplasm. The enzyme catalyses RNA(n+1) + phosphate = RNA(n) + a ribonucleoside 5'-diphosphate. In terms of biological role, involved in mRNA degradation. Catalyzes the phosphorolysis of single-stranded polyribonucleotides processively in the 3'- to 5'-direction. The protein is Polyribonucleotide nucleotidyltransferase of Marinobacter nauticus (strain ATCC 700491 / DSM 11845 / VT8) (Marinobacter aquaeolei).